The primary structure comprises 631 residues: UvrABC system protein C (631 aa).

Residues 1 to 20 are disordered; sequence MKNETEAVADQPPKTGPVKP. Positions 34-112 constitute a GIY-YIG domain; it reads MSPGVYRMLD…IKQLKPKFNV (79 aa). Residues 222 to 257 form the UVR domain; sequence TDLQRQLADGMAAASEAMEFERAAALRDRIRALTNV.

This sequence belongs to the UvrC family. Interacts with UvrB in an incision complex.

It localises to the cytoplasm. The UvrABC repair system catalyzes the recognition and processing of DNA lesions. UvrC both incises the 5' and 3' sides of the lesion. The N-terminal half is responsible for the 3' incision and the C-terminal half is responsible for the 5' incision. In Jannaschia sp. (strain CCS1), this protein is UvrABC system protein C.